Consider the following 715-residue polypeptide: Palmitoyltransferase ZDHHC5 (715 aa).

Residues 1–13 (MPAESGKRFKPSK) lie on the Cytoplasmic side of the membrane. The helical transmembrane segment at 14–34 (YVPVSAAAIFLVGATTLFFAF) threads the bilayer. The Extracellular portion of the chain corresponds to 35-52 (TCPGLSLNVSPAVPIYNA). A helical transmembrane segment spans residues 53–73 (IMFLFVLANFSMATFMDPGIF). Over 74–148 (PRAEEDEDKE…NCIGRRNYRY (75 aa)) the chain is Cytoplasmic. At tyrosine 91 the chain carries Phosphotyrosine. The region spanning 104-154 (KWCATCRFYRPPRCSHCSVCDNCVEEFDHHCPWVNNCIGRRNYRYFFLFLL) is the DHHC domain. Cysteine 134 acts as the S-palmitoyl cysteine intermediate in catalysis. The chain crosses the membrane as a helical span at residues 149-169 (FFLFLLSLTAHIMGVFGFGLL). Topologically, residues 170–191 (YVLYHIEELSGVRTAVTMAVMC) are extracellular. A helical membrane pass occupies residues 192–212 (VAGLFFIPVAGLTGFHVVLVA). The Cytoplasmic segment spans residues 213-715 (RGRTTNEQVT…VGGTTYEISV (503 aa)). Serine 247 carries the phosphoserine modification. Residues 289-715 (GELRRTKSKG…VGGTTYEISV (427 aa)) form a disordered region. Phosphothreonine is present on threonine 294. 2 positions are modified to phosphoserine: serine 296 and serine 299. Threonine 303 carries the phosphothreonine modification. Residue serine 345 is modified to Phosphoserine. Threonine 348 and threonine 350 each carry phosphothreonine. The segment covering 359-373 (SSSSTSAAMPHSSSA) has biased composition (low complexity). Serine 380, serine 398, serine 406, and serine 409 each carry phosphoserine. Phosphothreonine is present on threonine 411. A phosphoserine mark is found at serine 415, serine 425, serine 429, and serine 432. Residues 422-432 (SSGSRSSSLKS) show a composition bias toward low complexity. The residue at position 436 (threonine 436) is a Phosphothreonine. Residues 442 to 478 (QLQSIRSEGTTSTSYKSLANQTRNGSLSYDSLLTPSD) are compositionally biased toward polar residues. Phosphoserine is present on residues serine 529 and serine 554. Positions 581–597 (PRTSSSSDDSKRSPLSK) are enriched in low complexity. The residue at position 617 (arginine 617) is an Omega-N-methylarginine. The residue at position 621 (serine 621) is a Phosphoserine. Threonine 659 carries the phosphothreonine modification. Residues 666–677 (LKTTYSKSNGQP) show a composition bias toward polar residues. A phosphoserine mark is found at serine 684 and serine 694. Arginine 697 is modified (omega-N-methylarginine).

It belongs to the DHHC palmitoyltransferase family. ERF2/ZDHHC9 subfamily. Phosphorylation regulates association with endocytic proteins and its subcellular localization. Phosphorylation by LYN during fatty acid uptake leads to inactivation of the activity. Post-translationally, autopalmitoylated. Palmitoylation of the C-terminal tail regulates stimulation-dependent plasma membrane motility. As to expression, highly enriched in brain, detectable in liver and heart, and undetectable in most other tissues.

The protein localises to the cell membrane. The catalysed reaction is L-cysteinyl-[protein] + hexadecanoyl-CoA = S-hexadecanoyl-L-cysteinyl-[protein] + CoA. Palmitoyltransferase that catalyzes the addition of palmitate onto various protein substrates such as CTNND2, CD36, GSDMD, NLRP3, NOD1, NOD2, STAT3 and S1PR1 thus plays a role in various biological processes including cell adhesion, inflammation, fatty acid uptake, bacterial sensing or cardiac functions. Plays an important role in the regulation of synapse efficacy by mediating palmitoylation of delta-catenin/CTNND2, thereby increasing synaptic delivery and surface stabilization of alpha-amino-3-hydroxy-5-methyl-4-isoxazole propionic acid receptors (AMPARs). Under basal conditions, remains at the synaptic membrane through FYN-mediated phosphorylation that prevents association with endocytic proteins. Neuronal activity enhances the internalization and trafficking of DHHC5 from spines to dendritic shafts where it palmitoylates delta-catenin/CTNND2. Regulates cell adhesion at the plasma membrane by palmitoylating GOLGA7B and DSG2. Plays a role in innate immune response by mediating the palmitoylation of NOD1 and NOD2 and their proper recruitment to the bacterial entry site and phagosomes. Also participates in fatty acid uptake by palmitoylating CD36 and thereby targeting it to the plasma membrane. Upon binding of fatty acids to CD36, gets phosphorylated by LYN leading to inactivation and subsequent CD36 caveolar endocytosis. Controls oligodendrocyte development by catalyzing STAT3 palmitoylation. Acts as a regulator of inflammatory response by mediating palmitoylation of NLRP3 and GSDMD. Palmitoylates NLRP3 to promote inflammasome assembly and activation. Activates pyroptosis by catalyzing palmitoylation of gasdermin-D (GSDMD), thereby promoting membrane translocation and pore formation of GSDMD. The sequence is that of Palmitoyltransferase ZDHHC5 (Zdhhc5) from Mus musculus (Mouse).